A 417-amino-acid chain; its full sequence is MEVNPPKQEHLLALKVMRLTKPTLFTNIPVTCEEKDLPGDLFNQLMKDDPSTVNGAEILMLGEMLTLPQNFGNIFLGETFSSYISVHNDSNQVVKDILVKADLQTSSQRLNLSASNAAVAELKPDCCIDDVIHHEVKEIGTHILVCAVSYTTQGGEKMYFRKFFKFQVLKPLDVKTKFYNAESDLSSVTDEVFLEAQIQNITTSPMFMEKVSLEPSIMYNVTELNSVTQAGECISTFGSRGYLQPMDTRQYLYCLKPKKEFAEKAGIIKGVTVIGKLDIVWKTNLGERGRLQTSQLQRMAPGYGDVRLSLEAIPDTVNLEEPFHITCKITNCSERMMDLVLEMCNTNSIHWCGISGRQLGKLHPSSSLCLALTLLSSVQGLQSVSGLRLTDTFLKRTYEYDDIAQVCVVSAAVEVEA.

The protein belongs to the TRAPPC13 family. As to quaternary structure, part of the multisubunit TRAPP (transport protein particle) complex.

This is Trafficking protein particle complex subunit 13 (Trappc13) from Mus musculus (Mouse).